Reading from the N-terminus, the 183-residue chain is Large ribosomal subunit protein eL18 (183 aa).

Residues 150 to 183 are disordered; the sequence is RHFGPAPGAPRSHTKPYVRTKGHERARPRRRSNV. A compositionally biased stretch (basic residues) spans 161-183; it reads SHTKPYVRTKGHERARPRRRSNV.

Belongs to the eukaryotic ribosomal protein eL18 family.

The protein resides in the cytoplasm. The polypeptide is Large ribosomal subunit protein eL18 (RpL18) (Spodoptera frugiperda (Fall armyworm)).